The chain runs to 69 residues: Atypical cationic antimicrobial peptide (69 aa).

The signal sequence occupies residues 1 to 22; that stretch reads MAFLKKSLFLVLFLGLVSLSIC. Residues 23–45 constitute a propeptide that is removed on maturation; sequence DEEKRENEDEENQEDDEQSEMRR. Positions 25–45 are disordered; that stretch reads EKRENEDEENQEDDEQSEMRR. The segment covering 30-40 has biased composition (acidic residues); it reads EDEENQEDDEQ.

The protein belongs to the frog skin active peptide (FSAP) family. As to quaternary structure, monomer and/or weakly self-associated, oligomer, and amyloid-like fibril. Can adopt a monomeric nonamphipathic alpha-helical conformation, possibly with the aid of its cationic N- and C-termini, when bound to anionic membranes. Forms stable and ordered beta-sheet aggregates in aqueous environment or when bound to anionic or zwitterionic phospholipid vesicles. In terms of tissue distribution, expressed by the skin glands.

The protein resides in the secreted. The protein localises to the target cell membrane. Its function is as follows. Atypical cationic antimicrobial peptide with potent activity against Gram-negative and Gram-positive bacteria. Acts by inducing permeabilization of bacterial membrane. In vitro, also shows chemoattractant activity, which is mediated through a G protein-coupled receptor (probably FPR2 coupled to the ERK1/2 MAPK kinase pathway). Has slow-kinetic self-association and amyloid-like properties that modulate its activity. The soluble, weakly self-associated forms act on leukocytes to promote chemotaxis but have low antibacterial activity, the oligomers exhibit potent antimicrobial activity, whereas the amyloid-like fibrils have a very weak antibacterial activity. The membrane composition has a great influence on the peptide behavior. The peptide induces membrane leakage and insertion to a lesser extent in model membranes of the anionic lipid phosphatidylglycerol (PG) than in the model membranes of the zwitterionic lipid phosphatidylcholine (PC) vesicles. It forms more fibrils in PC than in PG. Membrane perturbations are more observed in the presence of PG than in the presence of PC. The peptide shows low hemolytic activity. The polypeptide is Atypical cationic antimicrobial peptide (Phyllomedusa sauvagei (Sauvage's leaf frog)).